A 308-amino-acid chain; its full sequence is Ribosomal protein L11 methyltransferase (308 aa).

4 residues coordinate S-adenosyl-L-methionine: Thr160, Gly181, Asp203, and Asn245.

This sequence belongs to the methyltransferase superfamily. PrmA family.

Its subcellular location is the cytoplasm. It catalyses the reaction L-lysyl-[protein] + 3 S-adenosyl-L-methionine = N(6),N(6),N(6)-trimethyl-L-lysyl-[protein] + 3 S-adenosyl-L-homocysteine + 3 H(+). Functionally, methylates ribosomal protein L11. This is Ribosomal protein L11 methyltransferase from Thermoanaerobacter sp. (strain X514).